Here is a 459-residue protein sequence, read N- to C-terminus: MEQITKPHCGARLDRLPDCRWHSSMFAIVAFGLLVCWSNAVGGLILAQLKALGWTDNSTTATFSAITTAGMFLGALVGGIIGDKTGRRNAFILYEAIHIASMVVGAFSPNMDFLIACRFVMGVGLGALLVTLFAGFTEYMPGRNRGTWSSRVSFIGNWSYPLCSLIAMGLTPLISAEWNWRVQLLIPAILSLIATALAWRYFPESPRWLESRGRYQEAEKVMRSIEEGVIRQTGKPLPPVVIADDGKAPQAVPYSALLTGVLLKRVILGSCVLIAMNVVQYTLINWLPTIFMTQGINLKDSIVLNTMSMFGAPFGIFIAMLVMDKIPRKTMGVGLLILIAVLGYIYSLQTSMLLITLIGFFLITFVYMYVCYASAVYVPEIWPTEAKLRGSGLANAVGRISGIAAPYAVAVLLSSYGVTGVFILLGAVSIIVAIAIATIGIETKGVSVESLSIDAVANK.

At 1–25 (MEQITKPHCGARLDRLPDCRWHSSM) the chain is on the cytoplasmic side. The chain crosses the membrane as a helical span at residues 26–46 (FAIVAFGLLVCWSNAVGGLIL). Residues 47 to 60 (AQLKALGWTDNSTT) lie on the Periplasmic side of the membrane. A helical transmembrane segment spans residues 61 to 81 (ATFSAITTAGMFLGALVGGII). Residues 82–90 (GDKTGRRNA) lie on the Cytoplasmic side of the membrane. A helical membrane pass occupies residues 91-111 (FILYEAIHIASMVVGAFSPNM). Residue Asp112 is a topological domain, periplasmic. A helical transmembrane segment spans residues 113-133 (FLIACRFVMGVGLGALLVTLF). At 134 to 153 (AGFTEYMPGRNRGTWSSRVS) the chain is on the cytoplasmic side. Residues 154–174 (FIGNWSYPLCSLIAMGLTPLI) form a helical membrane-spanning segment. Over 175 to 181 (SAEWNWR) the chain is Periplasmic. Residues 182–202 (VQLLIPAILSLIATALAWRYF) traverse the membrane as a helical segment. Topologically, residues 203–271 (PESPRWLESR…LLKRVILGSC (69 aa)) are cytoplasmic. A helical transmembrane segment spans residues 272 to 292 (VLIAMNVVQYTLINWLPTIFM). The Periplasmic portion of the chain corresponds to 293-301 (TQGINLKDS). Residues 302–322 (IVLNTMSMFGAPFGIFIAMLV) traverse the membrane as a helical segment. The Cytoplasmic portion of the chain corresponds to 323 to 329 (MDKIPRK). The helical transmembrane segment at 330-350 (TMGVGLLILIAVLGYIYSLQT) threads the bilayer. Ser351 is a topological domain (periplasmic). Residues 352–372 (MLLITLIGFFLITFVYMYVCY) traverse the membrane as a helical segment. Residues 373–399 (ASAVYVPEIWPTEAKLRGSGLANAVGR) are Cytoplasmic-facing. Transmembrane regions (helical) follow at residues 400–420 (ISGIAAPYAVAVLLSSYGVTG) and 421–441 (VFILLGAVSIIVAIAIATIGI). Residues 442–459 (ETKGVSVESLSIDAVANK) lie on the Cytoplasmic side of the membrane.

The protein belongs to the major facilitator superfamily. Sugar transporter (TC 2.A.1.1) family.

It localises to the cell inner membrane. The chain is Putative metabolite transport protein YdjK (ydjK) from Escherichia coli (strain K12).